The following is a 366-amino-acid chain: Tetraacyldisaccharide 4'-kinase (366 aa).

Position 62-69 (R62–T69) interacts with ATP.

It belongs to the LpxK family.

The enzyme catalyses a lipid A disaccharide + ATP = a lipid IVA + ADP + H(+). Its pathway is glycolipid biosynthesis; lipid IV(A) biosynthesis; lipid IV(A) from (3R)-3-hydroxytetradecanoyl-[acyl-carrier-protein] and UDP-N-acetyl-alpha-D-glucosamine: step 6/6. Transfers the gamma-phosphate of ATP to the 4'-position of a tetraacyldisaccharide 1-phosphate intermediate (termed DS-1-P) to form tetraacyldisaccharide 1,4'-bis-phosphate (lipid IVA). In Polynucleobacter necessarius subsp. necessarius (strain STIR1), this protein is Tetraacyldisaccharide 4'-kinase.